An 876-amino-acid chain; its full sequence is Valine--tRNA ligase (876 aa).

The 'HIGH' region motif lies at 43-53 (PNVTGVLHMGH). The 'KMSKS' region signature appears at 533-537 (KMSKS). Lys536 provides a ligand contact to ATP. Residues 804-876 (GALIDVEEEI…DSLNQLQSTK (73 aa)) are a coiled coil.

The protein belongs to the class-I aminoacyl-tRNA synthetase family. ValS type 1 subfamily. Monomer.

The protein resides in the cytoplasm. It carries out the reaction tRNA(Val) + L-valine + ATP = L-valyl-tRNA(Val) + AMP + diphosphate. Its function is as follows. Catalyzes the attachment of valine to tRNA(Val). As ValRS can inadvertently accommodate and process structurally similar amino acids such as threonine, to avoid such errors, it has a 'posttransfer' editing activity that hydrolyzes mischarged Thr-tRNA(Val) in a tRNA-dependent manner. The sequence is that of Valine--tRNA ligase from Porphyromonas gingivalis (strain ATCC 33277 / DSM 20709 / CIP 103683 / JCM 12257 / NCTC 11834 / 2561).